The chain runs to 479 residues: Pyruvate kinase (479 aa).

Arg36 contacts substrate. Residues Asn38, Ser40, and Asp70 each coordinate K(+). 38-41 (NFSH) lines the ATP pocket. ATP-binding residues include Arg77 and Lys160. Glu225 is a binding site for Mg(2+). Substrate-binding residues include Gly251, Asp252, and Thr284. A Mg(2+)-binding site is contributed by Asp252.

Belongs to the pyruvate kinase family. As to quaternary structure, homotetramer. Mg(2+) serves as cofactor. K(+) is required as a cofactor.

The catalysed reaction is pyruvate + ATP = phosphoenolpyruvate + ADP + H(+). It functions in the pathway carbohydrate degradation; glycolysis; pyruvate from D-glyceraldehyde 3-phosphate: step 5/5. Its activity is regulated as follows. Allosterically activated by AMP and by several sugar phosphates. Belongs to type II PK. The chain is Pyruvate kinase (pykA) from Buchnera aphidicola subsp. Baizongia pistaciae (strain Bp).